Here is a 268-residue protein sequence, read N- to C-terminus: tRNA pseudouridine synthase A (268 aa).

Asp-52 functions as the Nucleophile in the catalytic mechanism. Tyr-113 lines the substrate pocket.

This sequence belongs to the tRNA pseudouridine synthase TruA family. Homodimer.

The catalysed reaction is uridine(38/39/40) in tRNA = pseudouridine(38/39/40) in tRNA. In terms of biological role, formation of pseudouridine at positions 38, 39 and 40 in the anticodon stem and loop of transfer RNAs. This is tRNA pseudouridine synthase A from Chlamydia abortus (strain DSM 27085 / S26/3) (Chlamydophila abortus).